The primary structure comprises 306 residues: D-alanine--D-alanine ligase (306 aa).

The ATP-grasp domain maps to 104 to 303 (KMLWKAFGLP…FEQLVVKILE (200 aa)). 134–189 (VAKLGLPLMVKPSLEGSSVGLTKVKAVEELKSAVEYALKFDNTILIEEWLAGDELT) lines the ATP pocket. The Mg(2+) site is built by Asp-257, Glu-270, and Asn-272.

Belongs to the D-alanine--D-alanine ligase family. The cofactor is Mg(2+). Mn(2+) is required as a cofactor.

Its subcellular location is the cytoplasm. The catalysed reaction is 2 D-alanine + ATP = D-alanyl-D-alanine + ADP + phosphate + H(+). The protein operates within cell wall biogenesis; peptidoglycan biosynthesis. Functionally, cell wall formation. This is D-alanine--D-alanine ligase from Haemophilus influenzae (strain PittGG).